The sequence spans 380 residues: Growth-regulating factor 4 (380 aa).

A disordered region spans residues 1 to 21 (MDLQLKQWRSQQQNESEEQGS). In terms of domain architecture, QLQ spans 82–117 (FFSWAQWQELELQALIYRYMLAGASVPQELLLPIKK). The 45-residue stretch at 151–195 (DPEPGRCKRTDGKKWRCSRDVVAGHKYCDRHIHRGRNRSRKPVET) folds into the WRC domain. Short sequence motifs (bipartite nuclear localization signal) lie at residues 156 to 166 (RCKRTDGKKWR) and 184 to 191 (RGRNRSRK). Disordered regions lie at residues 222 to 270 (NNNH…GRSD) and 284 to 330 (RSSD…NMRN). Low complexity-rich tracts occupy residues 228 to 245 (SSGSSQPLHLSHQQSCSS) and 285 to 296 (SSDSTSSPMSSS). The segment covering 297 to 320 (TCHLSISMPGNNTSSDVSLKLSTG) has biased composition (polar residues).

This sequence belongs to the GRF family. Strongly expressed in actively growing and developing tissues, such as roots, upper stems, and shoot tips containing the shoot apical meristem (SAM) and flower buds. Also expressed in mature flowers, but weakly expressed in mature stems and leaves.

It localises to the nucleus. Transcription activator that plays a role in the regulation of cell expansion in leaf and cotyledons tissues. Component of a network formed by miR396, the GRFs and their interacting factors (GIFs) acting in the regulation of meristem function, at least partially through the control of cell proliferation. The protein is Growth-regulating factor 4 (GRF4) of Arabidopsis thaliana (Mouse-ear cress).